A 370-amino-acid polypeptide reads, in one-letter code: Uroporphyrinogen decarboxylase (370 aa).

Substrate-binding positions include 29-33, aspartate 79, tyrosine 155, serine 210, and histidine 342; that span reads RQAGR.

It belongs to the uroporphyrinogen decarboxylase family. Homodimer.

It localises to the cytoplasm. The catalysed reaction is uroporphyrinogen III + 4 H(+) = coproporphyrinogen III + 4 CO2. The protein operates within porphyrin-containing compound metabolism; protoporphyrin-IX biosynthesis; coproporphyrinogen-III from 5-aminolevulinate: step 4/4. Catalyzes the decarboxylation of four acetate groups of uroporphyrinogen-III to yield coproporphyrinogen-III. This chain is Uroporphyrinogen decarboxylase, found in Variovorax paradoxus (strain S110).